The sequence spans 2270 residues: Protein DOP1B (2270 aa).

Disordered stretches follow at residues 548–572 (METP…VEGE), 697–716 (LKQR…TEEE), and 1084–1145 (QEQD…DMPR). The span at 1095-1145 (ADTSTGHNDSDNTSSFTPSSVDLSSDQNYRDNTAGQVTHKNTGQQNMDMPR) shows a compositional bias: polar residues.

Belongs to the DOP1 family.

The protein resides in the golgi apparatus membrane. Its function is as follows. May be involved in protein traffic between late Golgi and early endosomes. In Xenopus laevis (African clawed frog), this protein is Protein DOP1B (dop1b).